The following is a 1192-amino-acid chain: MPRRAGSGQLPLPRGWEEARDYDGKVFYIDHNTRRTSWIDPRDRLTKPLSFADCVGDELPWGWEAGFDPQIGVYYIDHINKTTQIEDPRKQWRGEQEKMLKDYLSVAQDALRTQKELYHVKEQRLALALDEYVRLNDAYKEKSSSHTSLFSGSSSSTKYDPDILKAEISTTRLRVKKLKRELSQMKQELLYKEQGFETLQQIDKKMSGGQSGYELSEAKAILTELKSIRKAISSGEKEKQDLMQSLAKLQERFHLDQNIGRSEPDLRCSPVNSHLCLSRQTLDAGSQTSISGDIGVRSRSNLAEKVRLSLQYEEAKRSMANLKIELSKLDSEAWPGALDIEKEKLMLINEKEELLKELQFVTPQKRTQDELERLEAERQRLEEELLSVRGTPSRALAERLRLEERRKELLQKLEETTKLTTYLHSQLKSLSASTLSMSSGSSLGSLASSRGSLNTSSRGSLNSLSSTELYYSSQSDQIDVDYQYKLDFLLQEKSGYIPSGPITTIHENEVVKSPSQPGQSGLCGVAAAATGHTPPLAEAPKSVASLSSRSSLSSLSPPGSPLVLEGTFPMSSSHDASLHQFTADFEDCELSSHFADISLIENQILLDSDSGGASQSLSEDKDLNECAREPLYEGTADVEKSLPKRRVIHLLGEKTTCVSAAVSDESVAGDSGVYEAFVKQPSEMEDVTYSEEDVAIVETAQVQIGLRYNAKSSSFMVIIAQLRNLHAFLIPHTSKVYFRVAVLPSSTDVSCLFRTKVHPPTESILFNDVFRVAISQTALQQKTLRVDLCSVSKHRREECLAGTQISLADLPFSSEVFTLWYNLLPSKQMPCKKNEENEDSVFQPNQPLVDSIDLDAVSALLARTSAELLAVEQELAQEEEEESGQEEPRGPDGDWLTMLREASDEIVAEKEAEVKLPEDSSCTEDLSSCTSVPEMNEDGNRKESNCAKDLRSQPPTRIPTLVDKETNTDEAANDNMAVRPKERSSLSSRQHPFVRSSVIVRSQTFSPGERNQYICRLNRSDSDSSTLAKKSLFVRNSTERRSLRVKRTVCQSVLRRTTQECPVRTSLDLELDLQASLTRQSRLNDELQALRDLRQKLEELKAQGETDLPPGVLEDERFQRLLKQAEKQAEQSKEEQKQGLNAEKLMRQVSKDVCRLREQSQKVPRQVQSFREKIAYFTRAKISIPSLPADDV.

WW domains lie at 10–43 (LPLP…DPRD) and 57–90 (DELP…DPRK). Coiled coils occupy residues 121–194 (KEQR…YKEQ) and 224–256 (ELKS…FHLD). Ser-286 bears the Phosphoserine mark. Residues 302–421 (LAEKVRLSLQ…KLEETTKLTT (120 aa)) adopt a coiled-coil conformation. Residues 441–462 (SSLGSLASSRGSLNTSSRGSLN) form a disordered region. A C2 domain is found at 698–821 (ETAQVQIGLR…FSSEVFTLWY (124 aa)). The stretch at 859–887 (ALLARTSAELLAVEQELAQEEEEESGQEE) forms a coiled coil. Disordered regions lie at residues 873 to 895 (QELA…DGDW) and 911 to 991 (EAEV…SRQH). A compositionally biased stretch (acidic residues) spans 875–885 (LAQEEEEESGQ). Residues 923–933 (TEDLSSCTSVP) show a composition bias toward polar residues. Residues 938 to 951 (DGNRKESNCAKDLR) show a composition bias toward basic and acidic residues. Thr-1004 is modified (phosphothreonine). Ser-1022 is modified (phosphoserine). The tract at residues 1031-1050 (SLFVRNSTERRSLRVKRTVC) is interaction with PRKCZ. The stretch at 1068 to 1144 (DLELDLQASL…EQKQGLNAEK (77 aa)) forms a coiled coil. Over residues 1124–1137 (QAEKQAEQSKEEQK) the composition is skewed to basic and acidic residues. A disordered region spans residues 1124–1143 (QAEKQAEQSKEEQKQGLNAE).

It belongs to the WWC family. In terms of assembly, forms homodimers and heterodimers with WWC1 and WWC3. Interacts with DLC1 and PRKCZ. Interacts (via WW domains) with LATS1 and LATS2.

It localises to the cytoplasm. The protein localises to the cytosol. In terms of biological role, regulator of the Hippo signaling pathway, also known as the Salvador-Warts-Hippo (SWH) pathway. Enhances phosphorylation of LATS1 and YAP1 and negatively regulates cell proliferation and organ growth due to a suppression of the transcriptional activity of YAP1, the major effector of the Hippo pathway. In Homo sapiens (Human), this protein is Protein WWC2.